We begin with the raw amino-acid sequence, 644 residues long: Protein SNOWY COTYLEDON 3 (644 aa).

Disordered regions lie at residues 1 to 129 (MVAA…TRTE), 162 to 252 (ETAT…DGRL), and 290 to 414 (SDTD…SRVR). Over residues 53–77 (SPSPSHSTTTTTTTATSTSTSSSSS) the composition is skewed to low complexity. A compositionally biased stretch (polar residues) spans 91–112 (LSRTTNSASNLVYTPSSLPKRS). Residues 172 to 190 (CTPERRRATPVRDQRENSK) are compositionally biased toward basic and acidic residues. Polar residues-rich tracts occupy residues 290 to 302 (SDTD…STNG) and 314 to 332 (TRSL…QETN). Composition is skewed to low complexity over residues 343 to 370 (SPQC…SSDS) and 397 to 412 (ATAT…SPSR). Residues 463-466 (QWRF) carry the QWRF motif motif.

It belongs to the QWRF family. In terms of tissue distribution, expressed in young developing tissues, such as seedlings, roots, flowers, buds and young siliques, and to a lesser extent in mature green tissues.

The protein resides in the peroxisome. In terms of biological role, probable microtubule-associated peroxisomal protein required for chloroplast biogenesis and for the formation of the prolamellar body and prothylakoids in etioplasts. Not involved in peroxisomal metabolism, including mobilization of storage compounds during germination, fatty acid beta-oxydation or photorespiration. The sequence is that of Protein SNOWY COTYLEDON 3 (SCO3) from Arabidopsis thaliana (Mouse-ear cress).